Here is a 118-residue protein sequence, read N- to C-terminus: DNA-directed RNA polymerase subunit omega (118 aa).

A disordered region spans residues 78–104 (DEPEEDSMAMLMGGGQPDKPAEDDMSE).

The protein belongs to the RNA polymerase subunit omega family. In terms of assembly, the RNAP catalytic core consists of 2 alpha, 1 beta, 1 beta' and 1 omega subunit. When a sigma factor is associated with the core the holoenzyme is formed, which can initiate transcription.

It carries out the reaction RNA(n) + a ribonucleoside 5'-triphosphate = RNA(n+1) + diphosphate. Functionally, promotes RNA polymerase assembly. Latches the N- and C-terminal regions of the beta' subunit thereby facilitating its interaction with the beta and alpha subunits. The chain is DNA-directed RNA polymerase subunit omega from Dinoroseobacter shibae (strain DSM 16493 / NCIMB 14021 / DFL 12).